We begin with the raw amino-acid sequence, 245 residues long: NAD-dependent protein deacylase (245 aa).

The 237-residue stretch at 1 to 237 (MNFPYRNIVV…PKLVEELLAH (237 aa)) folds into the Deacetylase sirtuin-type domain. 13-32 (GAGISAESGIQTFRAQDGLW) provides a ligand contact to NAD(+). 2 residues coordinate substrate: Tyr57 and Arg60. Residue 94–97 (QNID) coordinates NAD(+). His112 (proton acceptor) is an active-site residue. Zn(2+) is bound by residues Cys120 and Cys139. NAD(+)-binding positions include 179-181 (GTS), 205-207 (NLE), and Ala223.

This sequence belongs to the sirtuin family. Class III subfamily. Zn(2+) is required as a cofactor.

The protein resides in the cytoplasm. It catalyses the reaction N(6)-acetyl-L-lysyl-[protein] + NAD(+) + H2O = 2''-O-acetyl-ADP-D-ribose + nicotinamide + L-lysyl-[protein]. The enzyme catalyses N(6)-succinyl-L-lysyl-[protein] + NAD(+) + H2O = 2''-O-succinyl-ADP-D-ribose + nicotinamide + L-lysyl-[protein]. Functionally, NAD-dependent lysine deacetylase and desuccinylase that specifically removes acetyl and succinyl groups on target proteins. Modulates the activities of several proteins which are inactive in their acylated form. In Vibrio vulnificus (strain YJ016), this protein is NAD-dependent protein deacylase.